We begin with the raw amino-acid sequence, 509 residues long: Maturase K (509 aa).

It belongs to the intron maturase 2 family. MatK subfamily.

It localises to the plastid. The protein resides in the chloroplast. Functionally, usually encoded in the trnK tRNA gene intron. Probably assists in splicing its own and other chloroplast group II introns. This chain is Maturase K, found in Eucommia ulmoides (Hardy rubber tree).